A 355-amino-acid chain; its full sequence is 3-dehydroquinate synthase (355 aa).

NAD(+) contacts are provided by residues 98–102, 122–123, K135, K144, and 162–165; these read GVIGD, TT, and TLNT. Residues E177, H240, and H257 each contribute to the Zn(2+) site.

Belongs to the sugar phosphate cyclases superfamily. Dehydroquinate synthase family. Co(2+) serves as cofactor. The cofactor is Zn(2+). Requires NAD(+) as cofactor.

The protein resides in the cytoplasm. The enzyme catalyses 7-phospho-2-dehydro-3-deoxy-D-arabino-heptonate = 3-dehydroquinate + phosphate. It functions in the pathway metabolic intermediate biosynthesis; chorismate biosynthesis; chorismate from D-erythrose 4-phosphate and phosphoenolpyruvate: step 2/7. Its function is as follows. Catalyzes the conversion of 3-deoxy-D-arabino-heptulosonate 7-phosphate (DAHP) to dehydroquinate (DHQ). This chain is 3-dehydroquinate synthase, found in Dictyoglomus thermophilum (strain ATCC 35947 / DSM 3960 / H-6-12).